Here is a 656-residue protein sequence, read N- to C-terminus: Heat shock 70 kDa protein, mitochondrial (656 aa).

The transit peptide at 1 to 23 directs the protein to the mitochondrion; it reads MFARRLRGAGSLAAASLARWQSS. The interval 624–656 is disordered; sequence EYQQAAAGNSSSSSGNTDSSQGEQQQQGDQQKQ. A compositionally biased stretch (low complexity) spans 626-656; the sequence is QQAAAGNSSSSSGNTDSSQGEQQQQGDQQKQ.

This sequence belongs to the heat shock protein 70 family.

The protein localises to the mitochondrion matrix. Its subcellular location is the kinetoplast. In terms of biological role, may participate in eukaryotic mitochondrial DNA replication. The chain is Heat shock 70 kDa protein, mitochondrial (MTP70) from Trypanosoma cruzi.